Consider the following 358-residue polypeptide: Bi-functional coumaroyl CoA and feruloyl CoA ortho-hydroxylase F6H2-2-1 (358 aa).

Residues 200 to 308 form the Fe2OG dioxygenase domain; it reads SKESLLMGSR…RISVPVFVNP (109 aa). Y216 serves as a coordination point for 2-oxoglutarate. Positions 231, 233, and 289 each coordinate Fe cation. 2 residues coordinate 2-oxoglutarate: R299 and S301.

This sequence belongs to the iron/ascorbate-dependent oxidoreductase family. L-ascorbate is required as a cofactor. Requires Fe(2+) as cofactor. In terms of tissue distribution, mostly expressed in underground stems and stems.

It catalyses the reaction (E)-4-coumaroyl-CoA + 2-oxoglutarate + O2 = (E)-2,4-dihydroxycinnamoyl-CoA + succinate + CO2. It carries out the reaction (E)-feruloyl-CoA + 2-oxoglutarate + O2 = (E)-6-hydroxyferuloyl-CoA + succinate + CO2. Its pathway is phenylpropanoid metabolism. Its function is as follows. 2-oxoglutarate (OG)- and Fe(II)-dependent dioxygenase (2OGD) involved in scopoletin and umbelliferone biosynthesis. Converts feruloyl CoA into 6'-hydroxyferuloyl CoA, and p-coumaroyl CoA into 2,4-dihydroxycinnamoyl-CoA, but has no activity toward caffeoyl-CoA. In Ipomoea batatas (Sweet potato), this protein is Bi-functional coumaroyl CoA and feruloyl CoA ortho-hydroxylase F6H2-2-1.